The sequence spans 103 residues: NADH-quinone oxidoreductase subunit K 1 (103 aa).

3 helical membrane-spanning segments follow: residues 6-26 (LGHF…GIFL), 32-52 (IIIL…LVAF), and 67-87 (LVLT…VVFF).

It belongs to the complex I subunit 4L family. In terms of assembly, NDH-1 is composed of 14 different subunits. Subunits NuoA, H, J, K, L, M, N constitute the membrane sector of the complex.

The protein resides in the cell inner membrane. It carries out the reaction a quinone + NADH + 5 H(+)(in) = a quinol + NAD(+) + 4 H(+)(out). In terms of biological role, NDH-1 shuttles electrons from NADH, via FMN and iron-sulfur (Fe-S) centers, to quinones in the respiratory chain. The immediate electron acceptor for the enzyme in this species is believed to be ubiquinone. Couples the redox reaction to proton translocation (for every two electrons transferred, four hydrogen ions are translocated across the cytoplasmic membrane), and thus conserves the redox energy in a proton gradient. The polypeptide is NADH-quinone oxidoreductase subunit K 1 (Rhodopseudomonas palustris (strain ATCC BAA-98 / CGA009)).